A 241-amino-acid chain; its full sequence is Probable cobalt-factor III C(17)-methyltransferase (241 aa).

Belongs to the precorrin methyltransferase family.

The enzyme catalyses Co(II)-factor III + S-adenosyl-L-methionine + H(+) = Co(II)-factor IV + S-adenosyl-L-homocysteine. It functions in the pathway cofactor biosynthesis; adenosylcobalamin biosynthesis; cob(II)yrinate a,c-diamide from sirohydrochlorin (anaerobic route): step 3/10. Its function is as follows. Methyltransferase that likely catalyzes the ring contraction and methylation of C-17 in cobalt-factor III to form cobalt-factor IV. May also convert cobalt-precorrin-3 to cobalt-precorrin-4. This chain is Probable cobalt-factor III C(17)-methyltransferase (cbiH), found in Salmonella typhimurium (strain LT2 / SGSC1412 / ATCC 700720).